The following is a 90-amino-acid chain: Molybdopterin synthase sulfur carrier subunit (90 aa).

The residue at position 90 (G90) is a 1-thioglycine; alternate. Position 90 is a glycyl adenylate; alternate (G90).

Belongs to the MoaD family. MOCS2A subfamily. In terms of assembly, heterotetramer; composed of 2 small (Mocs2A) and 2 large (Mocs2B) subunits. C-terminal thiocarboxylation occurs in 2 steps, it is first acyl-adenylated (-COAMP) via the hesA/moeB/thiF part of MOCS3, then thiocarboxylated (-COSH) via the rhodanese domain of MOCS3.

It is found in the cytoplasm. The protein operates within cofactor biosynthesis; molybdopterin biosynthesis. Functionally, acts as a sulfur carrier required for molybdopterin biosynthesis. Component of the molybdopterin synthase complex that catalyzes the conversion of precursor Z into molybdopterin by mediating the incorporation of 2 sulfur atoms into precursor Z to generate a dithiolene group. In the complex, serves as sulfur donor by being thiocarboxylated (-COSH) at its C-terminus by MOCS3. After interaction with Mocs2B, the sulfur is then transferred to precursor Z to form molybdopterin. Involved during biosynthesis of the molybdenum cofactor. The chain is Molybdopterin synthase sulfur carrier subunit from Drosophila melanogaster (Fruit fly).